The sequence spans 335 residues: Lipase chaperone (335 aa).

The helical transmembrane segment at 7–23 (LLPLAIALGLGFFIARP) threads the bilayer.

It belongs to the lipase chaperone family.

The protein localises to the cell inner membrane. Its function is as follows. May be involved in the folding of the extracellular lipase during its passage through the periplasm. The polypeptide is Lipase chaperone (lifO) (Ectopseudomonas mendocina (Pseudomonas mendocina)).